Here is a 278-residue protein sequence, read N- to C-terminus: uncharacterized protein (278 aa).

Residues 251 to 278 (TLSENKKQKSSSTSPETDSDMSEFFGDN) form a disordered region.

This is an uncharacterized protein from Aedes pseudoscutellaris reovirus (isolate France) (ApRV).